Consider the following 462-residue polypeptide: tRNA(Ile)-lysidine synthase (462 aa).

27 to 32 lines the ATP pocket; it reads SGGPDS.

The protein belongs to the tRNA(Ile)-lysidine synthase family.

The protein resides in the cytoplasm. It carries out the reaction cytidine(34) in tRNA(Ile2) + L-lysine + ATP = lysidine(34) in tRNA(Ile2) + AMP + diphosphate + H(+). In terms of biological role, ligates lysine onto the cytidine present at position 34 of the AUA codon-specific tRNA(Ile) that contains the anticodon CAU, in an ATP-dependent manner. Cytidine is converted to lysidine, thus changing the amino acid specificity of the tRNA from methionine to isoleucine. The polypeptide is tRNA(Ile)-lysidine synthase (Clostridioides difficile (strain 630) (Peptoclostridium difficile)).